Reading from the N-terminus, the 317-residue chain is Melanocyte-stimulating hormone receptor (317 aa).

The Extracellular portion of the chain corresponds to 1–37 (MPVQGSLRSLVGAVNSTPTASPHLRPATNQTEPQCLE). The N-linked (GlcNAc...) asparagine glycan is linked to asparagine 29. The chain crosses the membrane as a helical span at residues 38-63 (VSVPVGLFLCLGLVSLVENTLVVAVI). Residues 64–72 (AKNRNLHSP) lie on the Cytoplasmic side of the membrane. Residues 73–93 (MYCFICCLALSDLLVSVSNVL) traverse the membrane as a helical segment. At 94–118 (KTAVLLLLEAGALAAQATVVQQLGN) the chain is on the extracellular side. A helical membrane pass occupies residues 119–140 (VINMLICSSMVSSLCFLGAIAM). Residues 141 to 163 (DRYISIFYALRYHSIVTLARARR) lie on the Cytoplasmic side of the membrane. The chain crosses the membrane as a helical span at residues 164-183 (AIAAVWVASILSSILFFTYY). The Extracellular segment spans residues 184–191 (DRTAALLC). Residues 192 to 211 (LVVFFLAMLVLMAVLYVHML) traverse the membrane as a helical segment. Over 212 to 240 (TQACQHAQGIARLHKRQHPVQQGWGLKGA) the chain is Cytoplasmic. The helical transmembrane segment at 241-266 (ATLAVLLGVFFLCWGPLFLHLTLIAV) threads the bilayer. Residues 267 to 279 (CPQHPTCNCIVKN) are Extracellular-facing. The helical transmembrane segment at 280 to 300 (FKLFLALIICNAIVDPLIYAF) threads the bilayer. Topologically, residues 301 to 317 (RSQELRKTLKEVLLFSW) are cytoplasmic.

Belongs to the G-protein coupled receptor 1 family. In terms of assembly, interacts with MGRN1, but does not undergo MGRN1-mediated ubiquitination; this interaction competes with GNAS-binding and thus inhibits agonist-induced cAMP production. Interacts with OPN3; the interaction results in a decrease in MC1R-mediated cAMP signaling and ultimately a decrease in melanin production in melanocytes.

Its subcellular location is the cell membrane. Its function is as follows. Receptor for MSH (alpha, beta and gamma) and ACTH. The activity of this receptor is mediated by G proteins which activate adenylate cyclase. Mediates melanogenesis, the production of eumelanin (black/brown) and phaeomelanin (red/yellow), via regulation of cAMP signaling in melanocytes. The protein is Melanocyte-stimulating hormone receptor (MC1R) of Varecia rubra (Red ruffed lemur).